Reading from the N-terminus, the 501-residue chain is MAFWQPSQRLYLPPTPVTKVLCSEQYIRRKDVFYHGETERMLTVGHPYYEIKQSGSGKTIPKVSPNQYRVFRILLPDPNQFALPDKAMYDPSKERLVWAVVGVQVSRGQPLGGSVSGHSYQNTLIDAENVSKKVNAQGTDDRKQGGMDVKQQQILLLGCTPAIGEYWTTARPCVTDRPETGSCPPIELKNKPIEDGDMMDIGFGAANFKELNATKSDLPLDIAKDICLYPDYLKMTEEAAGNSMFFFARKEQVYVRHIWSRGGTDKEMPPEAYFLKPKGGDQTQKMPSILFGVPSGSLVSTDGQLFNRPYWLFRAQGMNNGICWLNQLFVTVGDNTRGTTLTITVPTSGSPLTEYDTSKFNVFQRHVEEYKLAFVFQLCSVTLSPETVSHLQGLMPSILEHWDINMQPPTSSILEDTYRYLESPATKCADNVTPMGPEDPYAGLKFWEVNLKERLSLDLDQFPLGRRFLAQQGLGCSTRKRVAPVPKVTEKRIVRKRRKGN.

This sequence belongs to the papillomaviridae L1 protein family. In terms of assembly, self-assembles into homopentamers. The capsid has an icosahedral symmetry and consists of 72 capsomers, with each capsomer being a pentamer of L1. Interacts with the minor capsid protein L2; this interaction is necessary for viral genome encapsidation. Interacts with protein E2; this interaction enhances E2-dependent replication and transcription activation.

Its subcellular location is the virion. It localises to the host nucleus. Forms an icosahedral capsid with a T=7 symmetry and a 50 nm diameter. The capsid is composed of 72 pentamers linked to each other by disulfide bonds and associated with L2 proteins. Binds to heparan sulfate proteoglycans on cell surface of basal layer keratinocytes to provide initial virion attachment. This binding mediates a conformational change in the virus capsid that facilitates efficient infection. The virion enters the host cell via endocytosis. During virus trafficking, L1 protein dissociates from the viral DNA and the genomic DNA is released to the host nucleus. The virion assembly takes place within the cell nucleus. Encapsulates the genomic DNA together with protein L2. This Cervus elaphus (Red deer) protein is Major capsid protein L1.